The following is a 162-amino-acid chain: Cytochrome c-type biogenesis protein CcmE (162 aa).

Residues 1-8 lie on the Cytoplasmic side of the membrane; sequence MNPVRKKR. The chain crosses the membrane as a helical; Signal-anchor for type II membrane protein span at residues 9–29; that stretch reads LIIVLAIVVGVGAAVGLALSA. Residues 30 to 162 lie on the Periplasmic side of the membrane; it reads LQQNINLFYT…GETSYNQEGK (133 aa). Heme is bound by residues H124 and Y128. The span at 139–148 shows a compositional bias: basic and acidic residues; sequence DSGQLKHYEN. The tract at residues 139-162 is disordered; that stretch reads DSGQLKHYENGKAAGETSYNQEGK.

This sequence belongs to the CcmE/CycJ family.

Its subcellular location is the cell inner membrane. Heme chaperone required for the biogenesis of c-type cytochromes. Transiently binds heme delivered by CcmC and transfers the heme to apo-cytochromes in a process facilitated by CcmF and CcmH. This is Cytochrome c-type biogenesis protein CcmE from Pseudomonas aeruginosa (strain LESB58).